We begin with the raw amino-acid sequence, 226 residues long: MDWSALQTILGGVNKHSTSIGKIWLTVLFIFRIMILVVAAKEVWGDEQADFVCNTLQPGCKNVCYDHYFPISHIRLWALQLIFVSTPALLVAMHVAYYRHEKKRKFIRGEIKTEFKDIEEIKNQKVRIEGSLWWTYTGSIFFRVIFEAAFMYVFYVMYDGFAMQRLVKCNAWPCPNTVDCFVSRPTEKTVFTVFMIAVSGICILLNVTELCYLLIRFCSGKSKKPV.

The stretch at 2 to 13 is an intramembrane region; sequence DWSALQTILGGV. Residues 14–20 are Cytoplasmic-facing; the sequence is NKHSTSI. A helical membrane pass occupies residues 21-40; the sequence is GKIWLTVLFIFRIMILVVAA. At 41–73 the chain is on the extracellular side; that stretch reads KEVWGDEQADFVCNTLQPGCKNVCYDHYFPISH. Ca(2+) contacts are provided by Glu42, Gly45, and Glu47. Cystine bridges form between Cys53–Cys180, Cys60–Cys174, and Cys64–Cys169. A helical membrane pass occupies residues 74–94; the sequence is IRLWALQLIFVSTPALLVAMH. At 95-135 the chain is on the cytoplasmic side; the sequence is VAYYRHEKKRKFIRGEIKTEFKDIEEIKNQKVRIEGSLWWT. A helical transmembrane segment spans residues 136–156; sequence YTGSIFFRVIFEAAFMYVFYV. Residues 157 to 189 are Extracellular-facing; the sequence is MYDGFAMQRLVKCNAWPCPNTVDCFVSRPTEKT. A helical transmembrane segment spans residues 190–210; sequence VFTVFMIAVSGICILLNVTEL. Over 211 to 226 the chain is Cytoplasmic; the sequence is CYLLIRFCSGKSKKPV.

The protein belongs to the connexin family. Beta-type (group I) subfamily. In terms of assembly, a hemichannel or connexon is composed of a hexamer of connexins. A functional gap junction is formed by the apposition of two hemichannels. Forms heteromeric channels with GJB4. Interacts with CNST.

Its subcellular location is the cell membrane. The protein resides in the cell junction. It is found in the gap junction. Its function is as follows. Structural component of gap junctions. Gap junctions are dodecameric channels that connect the cytoplasm of adjoining cells. They are formed by the docking of two hexameric hemichannels, one from each cell membrane. Small molecules and ions diffuse from one cell to a neighboring cell via the central pore. In Ovis aries (Sheep), this protein is Gap junction beta-2 protein (GJB2).